A 328-amino-acid chain; its full sequence is Methionyl-tRNA formyltransferase (328 aa).

121–124 (SLLP) lines the (6S)-5,6,7,8-tetrahydrofolate pocket.

This sequence belongs to the Fmt family.

It catalyses the reaction L-methionyl-tRNA(fMet) + (6R)-10-formyltetrahydrofolate = N-formyl-L-methionyl-tRNA(fMet) + (6S)-5,6,7,8-tetrahydrofolate + H(+). Its function is as follows. Attaches a formyl group to the free amino group of methionyl-tRNA(fMet). The formyl group appears to play a dual role in the initiator identity of N-formylmethionyl-tRNA by promoting its recognition by IF2 and preventing the misappropriation of this tRNA by the elongation apparatus. The protein is Methionyl-tRNA formyltransferase of Burkholderia thailandensis (strain ATCC 700388 / DSM 13276 / CCUG 48851 / CIP 106301 / E264).